The sequence spans 107 residues: uncharacterized protein (107 aa).

2 disordered regions span residues 51–75 (VQRSRLRRKGPINGNQGSAIPTQSA) and 88–107 (NPTPRGLSRLAASVPTAPEP). The span at 63–75 (NGNQGSAIPTQSA) shows a compositional bias: polar residues.

This is an uncharacterized protein from Fowl adenovirus A serotype 1 (strain CELO / Phelps) (FAdV-1).